The primary structure comprises 295 residues: UDP-N-acetylenolpyruvoylglucosamine reductase (295 aa).

The FAD-binding PCMH-type domain occupies valine 26–serine 189. Residue arginine 169 is part of the active site. Catalysis depends on cysteine 218, which acts as the Proton donor. Glutamate 288 is an active-site residue.

It belongs to the MurB family. Requires FAD as cofactor.

The protein localises to the cytoplasm. It carries out the reaction UDP-N-acetyl-alpha-D-muramate + NADP(+) = UDP-N-acetyl-3-O-(1-carboxyvinyl)-alpha-D-glucosamine + NADPH + H(+). It participates in cell wall biogenesis; peptidoglycan biosynthesis. Its function is as follows. Cell wall formation. This is UDP-N-acetylenolpyruvoylglucosamine reductase from Wolbachia sp. subsp. Drosophila simulans (strain wRi).